The sequence spans 810 residues: Phenylalanine--tRNA ligase beta subunit (810 aa).

Residues 39–150 enclose the tRNA-binding domain; that stretch reads RSWAAGVVLG…LDLPSGSPVG (112 aa). Residues 407-495 form the B5 domain; sequence RGEAIINLRL…RLYGYDHFCE (89 aa). Mg(2+) contacts are provided by D473, D479, E482, and E483. Residues 716-809 enclose the FDX-ACB domain; the sequence is SPYPAVARDL…LTKQFAVSLR (94 aa).

This sequence belongs to the phenylalanyl-tRNA synthetase beta subunit family. Type 1 subfamily. As to quaternary structure, tetramer of two alpha and two beta subunits. Requires Mg(2+) as cofactor.

Its subcellular location is the cytoplasm. The enzyme catalyses tRNA(Phe) + L-phenylalanine + ATP = L-phenylalanyl-tRNA(Phe) + AMP + diphosphate + H(+). In Synechocystis sp. (strain ATCC 27184 / PCC 6803 / Kazusa), this protein is Phenylalanine--tRNA ligase beta subunit (pheT).